Consider the following 441-residue polypeptide: Protein SPMIP7 (441 aa).

In terms of tissue distribution, testis specific. Expressed at the spermatid stage.

In terms of biological role, essential for normal spermatogenesis. This Mus musculus (Mouse) protein is Protein SPMIP7 (Spmip7).